Here is a 236-residue protein sequence, read N- to C-terminus: Bacterial rhodopsin CSR3 (236 aa).

At 1–3 (MDA) the chain is on the extracellular side. The chain crosses the membrane as a helical span at residues 4-25 (VAVVYGITAAGFAVGVAIVGYL). The Cytoplasmic portion of the chain corresponds to 26-34 (YASLEGSEE). A helical transmembrane segment spans residues 35–56 (RSILAALALIPGFAGISYVAMA). The Extracellular portion of the chain corresponds to 57-70 (FGIGTVTIGETTLV). The helical transmembrane segment at 71–92 (GFRYLDWVVTTPLLVGFVGYAA) threads the bilayer. Residues 93 to 95 (GAS) are Cytoplasmic-facing. A helical transmembrane segment spans residues 96-118 (RRAIFGVMVADALMILTGVGAVV). Topologically, residues 119–122 (ADGT) are extracellular. Residues 123-150 (LKWVLFGVSTVFHVSLFAYLYLVFPRSV) traverse the membrane as a helical segment. Over 151 to 153 (PDD) the chain is Cytoplasmic. Residues 154–181 (PQRIGLFSLLKNHIGLLWIAYPLVWLAG) form a helical membrane-spanning segment. Residues 182–189 (PEGLGLAT) are Extracellular-facing. A helical membrane pass occupies residues 190 to 222 (YVGVSITYAFLDLLAKVPYVYFFYARRQVFATK). N6-(retinylidene)lysine is present on Lys-205. Residues 223–236 (LLRDSGEVTATPAD) are Cytoplasmic-facing.

Belongs to the archaeal/bacterial/fungal opsin family.

It localises to the cell membrane. The chain is Bacterial rhodopsin CSR3 from Haloarcula vallismortis (Halobacterium vallismortis).